A 272-amino-acid chain; its full sequence is Glutamate racemase (272 aa).

Residues 10-11 (DS) and 42-43 (YG) each bind substrate. C74 (proton donor/acceptor) is an active-site residue. 75 to 76 (NT) lines the substrate pocket. C185 functions as the Proton donor/acceptor in the catalytic mechanism. Substrate is bound at residue 186-187 (TH).

It belongs to the aspartate/glutamate racemases family.

The catalysed reaction is L-glutamate = D-glutamate. Its pathway is cell wall biogenesis; peptidoglycan biosynthesis. Provides the (R)-glutamate required for cell wall biosynthesis. The protein is Glutamate racemase of Bacillus velezensis (strain DSM 23117 / BGSC 10A6 / LMG 26770 / FZB42) (Bacillus amyloliquefaciens subsp. plantarum).